A 436-amino-acid polypeptide reads, in one-letter code: tRNA-2-methylthio-N(6)-dimethylallyladenosine synthase (436 aa).

The 115-residue stretch at Met-1–Arg-115 folds into the MTTase N-terminal domain. [4Fe-4S] cluster is bound by residues Cys-10, Cys-46, Cys-80, Cys-151, Cys-155, and Cys-158. The Radical SAM core domain occupies Arg-137 to Glu-368. One can recognise a TRAM domain in the interval Met-371–Lys-432.

This sequence belongs to the methylthiotransferase family. MiaB subfamily. In terms of assembly, monomer. [4Fe-4S] cluster serves as cofactor.

It is found in the cytoplasm. It catalyses the reaction N(6)-dimethylallyladenosine(37) in tRNA + (sulfur carrier)-SH + AH2 + 2 S-adenosyl-L-methionine = 2-methylsulfanyl-N(6)-dimethylallyladenosine(37) in tRNA + (sulfur carrier)-H + 5'-deoxyadenosine + L-methionine + A + S-adenosyl-L-homocysteine + 2 H(+). Functionally, catalyzes the methylthiolation of N6-(dimethylallyl)adenosine (i(6)A), leading to the formation of 2-methylthio-N6-(dimethylallyl)adenosine (ms(2)i(6)A) at position 37 in tRNAs that read codons beginning with uridine. The sequence is that of tRNA-2-methylthio-N(6)-dimethylallyladenosine synthase from Pseudothermotoga lettingae (strain ATCC BAA-301 / DSM 14385 / NBRC 107922 / TMO) (Thermotoga lettingae).